The primary structure comprises 985 residues: Bifunctional glutamine synthetase adenylyltransferase/adenylyl-removing enzyme (985 aa).

Residues 1–460 form an adenylyl removase region; it reads MSLPSLADFP…HFRQVIADPD (460 aa). Residues 476–985 form an adenylyl transferase region; that stretch reads GGEWLPLWEE…MRIWAQMGLS (510 aa).

This sequence belongs to the GlnE family. The cofactor is Mg(2+).

It carries out the reaction [glutamine synthetase]-O(4)-(5'-adenylyl)-L-tyrosine + phosphate = [glutamine synthetase]-L-tyrosine + ADP. The catalysed reaction is [glutamine synthetase]-L-tyrosine + ATP = [glutamine synthetase]-O(4)-(5'-adenylyl)-L-tyrosine + diphosphate. Functionally, involved in the regulation of glutamine synthetase GlnA, a key enzyme in the process to assimilate ammonia. When cellular nitrogen levels are high, the C-terminal adenylyl transferase (AT) inactivates GlnA by covalent transfer of an adenylyl group from ATP to specific tyrosine residue of GlnA, thus reducing its activity. Conversely, when nitrogen levels are low, the N-terminal adenylyl removase (AR) activates GlnA by removing the adenylyl group by phosphorolysis, increasing its activity. The regulatory region of GlnE binds the signal transduction protein PII (GlnB) which indicates the nitrogen status of the cell. This is Bifunctional glutamine synthetase adenylyltransferase/adenylyl-removing enzyme from Pseudomonas syringae pv. tomato (strain ATCC BAA-871 / DC3000).